The following is an 84-amino-acid chain: Putative membrane protein insertion efficiency factor (84 aa).

This sequence belongs to the UPF0161 family.

It localises to the cell inner membrane. Could be involved in insertion of integral membrane proteins into the membrane. This Acidiphilium cryptum (strain JF-5) protein is Putative membrane protein insertion efficiency factor.